Here is a 194-residue protein sequence, read N- to C-terminus: FMN-dependent NADH:quinone oxidoreductase (194 aa).

FMN-binding positions include serine 10 and methionine 90–leucine 93.

It belongs to the azoreductase type 1 family. In terms of assembly, homodimer. The cofactor is FMN.

It carries out the reaction 2 a quinone + NADH + H(+) = 2 a 1,4-benzosemiquinone + NAD(+). The enzyme catalyses N,N-dimethyl-1,4-phenylenediamine + anthranilate + 2 NAD(+) = 2-(4-dimethylaminophenyl)diazenylbenzoate + 2 NADH + 2 H(+). In terms of biological role, quinone reductase that provides resistance to thiol-specific stress caused by electrophilic quinones. Its function is as follows. Also exhibits azoreductase activity. Catalyzes the reductive cleavage of the azo bond in aromatic azo compounds to the corresponding amines. The chain is FMN-dependent NADH:quinone oxidoreductase from Haemophilus influenzae (strain ATCC 51907 / DSM 11121 / KW20 / Rd).